The sequence spans 292 residues: Acetyl-coenzyme A carboxylase carboxyl transferase subunit beta (292 aa).

One can recognise a CoA carboxyltransferase N-terminal domain in the interval 29–292 (LWSKCPECGQ…HGCESRVASS (264 aa)). Zn(2+) contacts are provided by C33, C36, C52, and C55. The segment at 33-55 (CPECGQVVYRKDLLSNASVCGNC) adopts a C4-type zinc-finger fold.

Belongs to the AccD/PCCB family. In terms of assembly, acetyl-CoA carboxylase is a heterohexamer composed of biotin carboxyl carrier protein (AccB), biotin carboxylase (AccC) and two subunits each of ACCase subunit alpha (AccA) and ACCase subunit beta (AccD). Zn(2+) serves as cofactor.

It localises to the cytoplasm. The enzyme catalyses N(6)-carboxybiotinyl-L-lysyl-[protein] + acetyl-CoA = N(6)-biotinyl-L-lysyl-[protein] + malonyl-CoA. It functions in the pathway lipid metabolism; malonyl-CoA biosynthesis; malonyl-CoA from acetyl-CoA: step 1/1. In terms of biological role, component of the acetyl coenzyme A carboxylase (ACC) complex. Biotin carboxylase (BC) catalyzes the carboxylation of biotin on its carrier protein (BCCP) and then the CO(2) group is transferred by the transcarboxylase to acetyl-CoA to form malonyl-CoA. The chain is Acetyl-coenzyme A carboxylase carboxyl transferase subunit beta from Synechococcus sp. (strain CC9311).